Consider the following 419-residue polypeptide: MSRPPWKSPLCEMVQPSGSPAGDQDMLGEESSLGKPAMLHVPSEQGTPETFQRCLEENQELRDAIRQSNQMLRERCEELQHFQGNQREEKAFLMQKFQEARDLVVRLSLEKRELRQQREQALKEVERLKTCQQQMAEDKASVKAQVTSLLGELQESQSRLEAATKERQALESRARVASEKARQLESEREALEQRHSVQVDQLVLQNESMEAALRMERQAASEEKRKLAQLQVAYHQLFQEYDNHMKSSMVSSERNRGLQLEDLKQQLQQAEEALVAKQEVIDKLKEEAEQHKIVMETVPVLKAQADIYKADFQAERQAREKLAEKKEFLQEQLEQLQREYSRLKTSCQESARIEDMRKRHVEVSQPPLAPGPAHHSFHLNPSSQRRSPPDEPPKFCCPKCQYQAPDIDTLQIHVMECIE.

Positions 1 to 48 are disordered; sequence MSRPPWKSPLCEMVQPSGSPAGDQDMLGEESSLGKPAMLHVPSEQGTP. The tract at residues 1–197 is required for interaction with and ubiquitination by MARCHF2; the sequence is MSRPPWKSPL…REALEQRHSV (197 aa). S31 and S43 each carry phosphoserine; by IKKB. Positions 44–111 are interaction with CHUK/IKBKB; sequence EQGTPETFQR…DLVVRLSLEK (68 aa). Positions 49–353 form a coiled coil; it reads ETFQRCLEEN…KTSCQESARI (305 aa). S68 bears the Phosphoserine mark. Residues K111, K139, K143, K226, K246, and K264 each participate in a glycyl lysine isopeptide (Lys-Gly) (interchain with G-Cter in ubiquitin) cross-link. The interval 150-257 is interaction with TANK; it reads LGELQESQSR…SMVSSERNRG (108 aa). Residues 242–350 are ubiquitin-binding (UBAN); sequence DNHMKSSMVS…SRLKTSCQES (109 aa). Residues 246–365 form a self-association region; that stretch reads KSSMVSSERN…MRKRHVEVSQ (120 aa). Residues 251–419 form a required for interaction with TNFAIP3 region; the sequence is SSERNRGLQL…LQIHVMECIE (169 aa). K277 participates in a covalent cross-link: Glycyl lysine isopeptide (Lys-Gly) (interchain with G-Cter in SUMO); alternate. K277 participates in a covalent cross-link: Glycyl lysine isopeptide (Lys-Gly) (interchain with G-Cter in ubiquitin); alternate. Glycyl lysine isopeptide (Lys-Gly) (interchain with G-Cter in ubiquitin) cross-links involve residues K283, K285, K292, and K302. K309 participates in a covalent cross-link: Glycyl lysine isopeptide (Lys-Gly) (interchain with G-Cter in SUMO); alternate. Residue K309 forms a Glycyl lysine isopeptide (Lys-Gly) (interchain with G-Cter in ubiquitin); alternate linkage. Residues K321, K325, and K326 each participate in a glycyl lysine isopeptide (Lys-Gly) (interchain with G-Cter in ubiquitin) cross-link. Residues 322–343 form a leucine-zipper region; it reads LAEKKEFLQEQLEQLQREYSRL. Positions 356–394 are disordered; it reads MRKRHVEVSQPPLAPGPAHHSFHLNPSSQRRSPPDEPPK. Position 376 is a phosphoserine; by IKKB (S376). The segment at 382–419 is interaction with CYLD; the sequence is SSQRRSPPDEPPKFCCPKCQYQAPDIDTLQIHVMECIE. At S387 the chain carries Phosphoserine. The segment at 389 to 419 adopts a CCHC NOA-type zinc-finger fold; that stretch reads PDEPPKFCCPKCQYQAPDIDTLQIHVMECIE. Zn(2+) is bound at residue C397. Residue K399 forms a Glycyl lysine isopeptide (Lys-Gly) (interchain with G-Cter in ubiquitin) linkage. Residues C400, H413, and C417 each contribute to the Zn(2+) site.

Homodimer; disulfide-linked. Component of the I-kappa-B-kinase (IKK) core complex consisting of CHUK, IKBKB and IKBKG; probably four alpha/CHUK-beta/IKBKB dimers are associated with four gamma/IKBKG subunits. The IKK core complex seems to associate with regulatory or adapter proteins to form a IKK-signalosome holo-complex. The IKK complex associates with TERF2IP/RAP1, leading to promote IKK-mediated phosphorylation of RELA/p65. Part of a complex composed of NCOA2, NCOA3, CHUK/IKKA, IKBKB, IKBKG and CREBBP. Interacts with COPS3, CYLD, NALP2, TRPC4AP and PIDD1. Interacts with ATM; the complex is exported from the nucleus. Interacts with TRAF6. Interacts with IKBKE. Interacts with TANK; the interaction is enhanced by IKBKE and TBK1. Part of a ternary complex consisting of TANK, IKBKB and IKBKG. Interacts with ZFAND5. Interacts with RIPK2. Interacts with TNIP1 and TNFAIP3; TNIP1 facilitates the TNFAIP3-mediated de-ubiquitination of IKBKG. Interacts with TNFAIP3; the interaction is induced by TNF stimulation and by polyubiquitin. Binds (via UBAN region) polyubiquitin; binds both 'Lys-63'-linked and linear polyubiquitin, with higher affinity for linear ubiquitin. Interacts with NLRP10. Interacts with TANK; this interaction increases in response to DNA damage. Interacts with USP10; this interaction increases in response to DNA damage. Interacts with ZC3H12A; this interaction increases in response to DNA damage. Interacts with IFIT5; the interaction synergizes the recruitment of IKK to MAP3K7 and enhances IKK phosphorylation. Interacts with TRIM29; this interaction induces IKBKG/NEMO ubiquitination and proteolytic degradation. Interacts with TRIM13; this interaction leads to IKBKG/NEMO ubiquitination. Interacts with ARFIP2. Interacts with RIPK1. Interacts with (ubiquitinated) BCL10; interaction with polyubiquitinated BCL10 via both 'Lys-63'-linked and linear ubiquitin is required for TCR-induced NF-kappa-B activation. Interacts with MARCHF2; during the late stages of macrophage viral and bacterial infection; the interaction leads to ubiquitination and degradation of IKBKG/NEMO. In terms of processing, phosphorylation at Ser-68 attenuates aminoterminal homodimerization. Polyubiquitinated on Lys-285 through 'Lys-63'; the ubiquitination is mediated downstream of NOD2 and RIPK2 and probably plays a role in signaling by facilitating interactions with ubiquitin domain-containing proteins and activates the NF-kappa-B pathway. Polyubiquitinated on Lys-399 through 'Lys-63'; the ubiquitination is mediated by BCL10, MALT1 and TRAF6 and probably plays a role in signaling by facilitating interactions with ubiquitin domain-containing proteins and activates the NF-kappa-B pathway. Monoubiquitinated on Lys-277 and Lys-309; promotes nuclear export. Polyubiquitinated through 'Lys-27' by TRIM23; involved in antiviral innate and inflammatory responses. Linear polyubiquitinated on Lys-111, Lys-143, Lys-226, Lys-246, Lys-264, Lys-277, Lys-285, Lys-292, Lys-302, Lys-309 and Lys-326; the head-to-tail polyubiquitination is mediated by the LUBAC complex and plays a key role in NF-kappa-B activation. Deubiquitinated by USP10 in a TANK-dependent and -independent manner, leading to the negative regulation of NF-kappa-B signaling upon DNA damage. Ubiquitinated at Lys-326 by MARCHF2 following bacterial and viral infection which leads to its degradation. Polyubiquitinated via 'Lys-29'-linked ubiquitin; leading to lysosomal degradation. Post-translationally, sumoylated on Lys-277 and Lys-309 with SUMO1. In terms of processing, neddylated by TRIM40, resulting in stabilization of NFKBIA and down-regulation of NF-kappa-B activity.

The protein resides in the cytoplasm. The protein localises to the nucleus. Functionally, regulatory subunit of the IKK core complex which phosphorylates inhibitors of NF-kappa-B thus leading to the dissociation of the inhibitor/NF-kappa-B complex and ultimately the degradation of the inhibitor. Its binding to scaffolding polyubiquitin plays a key role in IKK activation by multiple signaling receptor pathways. Can recognize and bind both 'Lys-63'-linked and linear polyubiquitin upon cell stimulation, with a much highr affinity for linear polyubiquitin. Could be implicated in NF-kappa-B-mediated protection from cytokine toxicity. Essential for viral activation of IRF3. Involved in TLR3- and IFIH1-mediated antiviral innate response; this function requires 'Lys-27'-linked polyubiquitination. The polypeptide is NF-kappa-B essential modulator (IKBKG) (Bos taurus (Bovine)).